Consider the following 108-residue polypeptide: Glutaredoxin-1 (108 aa).

In terms of domain architecture, Glutaredoxin spans 3–106; that stretch reads EEFVQQRLTN…DILSSIGVLR (104 aa). Cys-23 and Cys-26 are disulfide-bonded.

It belongs to the glutaredoxin family.

The protein localises to the virion. Its function is as follows. Displays thioltransferase and dehydroascorbate reductase activities. The sequence is that of Glutaredoxin-1 (OPG075) from Variola virus (isolate Human/India/Ind3/1967) (VARV).